Reading from the N-terminus, the 237-residue chain is Ribosomal RNA small subunit methyltransferase G (237 aa).

S-adenosyl-L-methionine contacts are provided by residues G76, F81, 128–129 (VE), and R147.

This sequence belongs to the methyltransferase superfamily. RNA methyltransferase RsmG family.

The protein localises to the cytoplasm. Its function is as follows. Specifically methylates the N7 position of a guanine in 16S rRNA. This is Ribosomal RNA small subunit methyltransferase G from Prochlorococcus marinus (strain AS9601).